Reading from the N-terminus, the 271-residue chain is Type III pantothenate kinase (271 aa).

Residue 6-13 coordinates ATP; the sequence is DVRNTNIV. 109-112 is a substrate binding site; sequence GADR. The active-site Proton acceptor is Asp111. Asp131 serves as a coordination point for K(+). Thr134 contacts ATP. Thr186 contacts substrate.

The protein belongs to the type III pantothenate kinase family. In terms of assembly, homodimer. It depends on NH4(+) as a cofactor. K(+) is required as a cofactor.

It localises to the cytoplasm. It catalyses the reaction (R)-pantothenate + ATP = (R)-4'-phosphopantothenate + ADP + H(+). Its pathway is cofactor biosynthesis; coenzyme A biosynthesis; CoA from (R)-pantothenate: step 1/5. Functionally, catalyzes the phosphorylation of pantothenate (Pan), the first step in CoA biosynthesis. The protein is Type III pantothenate kinase of Rhodococcus erythropolis (strain PR4 / NBRC 100887).